A 467-amino-acid polypeptide reads, in one-letter code: Calcium-binding protein P (467 aa).

2 stretches are compositionally biased toward pro residues: residues 1–10 (MQNPQNPPPA) and 45–62 (QYPP…PPYP). The segment at 1 to 311 (MQNPQNPPPA…GAYPGQPPMG (311 aa)) is disordered. The short motif at 45–49 (QYPPQ) is the XYPPX element. Residues 63–74 (GTQQPGAPGAPG) are compositionally biased toward low complexity. Short sequence motifs (XYPPX) lie at residues 75-79 (QYPPQ), 83-87 (QYPPQ), 94-98 (QYPPQ), 104-108 (GYPPQ), 115-119 (QYPPQ), 125-129 (GYPPQ), 136-140 (QYPPQ), 146-150 (QYPPQ), 157-161 (QYPPQ), 165-169 (QYPPQ), 176-180 (AYPPQ), 187-191 (AYPPQ), 221-225 (GVPPQ), 238-242 (AYPPQ), 247-251 (AYPPQ), 256-260 (AYPPQ), and 275-279 (AYPPQ). 2 stretches are compositionally biased toward pro residues: residues 75 to 109 (QYPP…PPQQ) and 118 to 131 (PQQP…PQQP). Residues 132–145 (GAPGQYPPQQGQPG) are compositionally biased toward low complexity. Composition is skewed to low complexity over residues 153-193 (GQPG…PQQG) and 215-246 (AYPG…GQPG). Low complexity predominate over residues 253 to 311 (QPGAYPPQQQQVAYPGQQPPMGAYPPQQGAYPGQQGAYPGQQGAYPGQQGAYPGQPPMG). 2 EF-hand domains span residues 399–434 (QKMM…LGYY) and 435–467 (FSKG…WSMQ). 5 residues coordinate Ca(2+): aspartate 412, asparagine 414, serine 416, threonine 418, and glutamate 423.

The polypeptide is Calcium-binding protein P (cbpP) (Dictyostelium discoideum (Social amoeba)).